A 1402-amino-acid polypeptide reads, in one-letter code: MKDIEASKKPHTTTVAPPQINFIKNNENIFQPKPISNVTTTTVQPPQIVSPPSPPSPPQTTTIAPPTILPTTKTTTTTTTTTTTTTTVQPPQIVSPPIINNLIIQNNLNTPSLSSTPSPLPNNNNSNENDNDINNLKISKEEYQTQIEIQQQIQRQQILERQQLLQRRNQEQLDLLERHNDYQELINTHQNFVPPNNRFSQQIHVSQLKKQSSQSQLQQQLSSQSLQQIQQKSKQPPPQQQQQQQPPPPPIPLLPQIHQQLKPKQQQEQQQQQEQQQQQTENERINELRRLKRKKEYHNDEYKDDEIYLDNILKGIDIRKLEKLTAVELRKIGKTLGVPMGNNTKGETFQRIKSFIENHKKKKQKYREYQSEKNQQQKSNSKKLVNNSTIYDLPIKDIEHLEQLFWRIFRNIVLFRKIIGNLSRGGFFDQQQQQQQQQQSTMTTTSSSSSPMTSSDDKFFYCYNYIFSKTFKYDQIIHVSWIVDSNYFGLLKYKVSRGDLLVFCNHNTINDGDVNDDEDQNTKYEFCKMFKKIFNSIRSIQDKSFYRDLFTNYSEFIFDRINKRYPIDIYLVGSLAIECNCLVATKLLISEFQFRPVMNHSLQLAIKSGSYKMVKLIVTTIHRQMSLNPNNKPFDIEMFSKINNPSIKIINLLIQLRLFTYSNIINLVIADAKLINDNNENDILQFNKNLKNQIFNYSNLLNSFTFNNNINNNNNNNINNNNNNNNNNNNNNNNNNNNNNSNLSNNTIEYSKIKTKTVFNQFTIKQLINSCKLIVTFDLKNQYQQQYYKRHYEDSDNEEEEEITQASFTINTMAEIEFIETQITKEEKHCFVKKVIQKQLLKDGEKEDYDGIKRLAELYVSLNPHLKVYCNFMYKIIYGNENCYDQDLDDEDLFDYRVTRVFDSNCFKQSLKYGSPGYWIEYKEVEMKYAFLSNKYRNEITPNLLFKYVSPNNLNKQLKFIKKIYNSSIENGNSNGNGNGNGGTVIGGILDRLLLFYLIIENNNLELLSIVIKEFPLISNFCYIAKSNSEIYNLKIPRFIRSIEMLEFCFSNFRDHFYLPQSNSLTADFYGFQNVELLRKYDQLMVLDDMDKGIIVSNKKVRASFDDFHFIFEWGSSLKNYNNYLKMLAYIVEDPYGLYTIVTNEILLLSAILSPTTSSGEPLLNLNIERQLIFQEIISSFSTILEGTELKYYPEQMFQESTHLKRFFDWIFENRSEDLLIGGRCVITQSVQSHMLYRAGRLDIVLRKGYYYDDTNEGSKKIMPVGLALVLDDIGKYGDVVALEKYIRSCIPLMKQQSELLTLLDKDERESRACFSQCQRHFSSLLSKASIYGRINIFQHIFYNHQFIFDKKSLLFARKGFLSKISFKKLILECHYHKQHHILDFIQNVIGLDITPKQIKSN.

Disordered regions lie at residues 1 to 20 (MKDI…PPQI), 37 to 94 (NVTT…PQIV), 109 to 133 (NTPS…DNDI), and 210 to 292 (KQSS…RRLK). Tandem repeats lie at residues 12-18 (TTTVAPP) and 40-46 (TTTVQPP). A 4 X 7 AA repeat of T-T-T-[IV]-[AQ]-P-P region spans residues 12–92 (TTTVAPPQIN…TTTTTVQPPQ (81 aa)). Residues 38-47 (VTTTTVQPPQ) are compositionally biased toward low complexity. Pro residues predominate over residues 48-58 (IVSPPSPPSPP). The segment covering 59 to 94 (QTTTIAPPTILPTTKTTTTTTTTTTTTTTVQPPQIV) has biased composition (low complexity). Repeat copies occupy residues 60-66 (TTTIAPP) and 86-92 (TTVQPPQ). Residues 210–234 (KQSSQSQLQQQLSSQSLQQIQQKSK) show a composition bias toward low complexity. Pro residues predominate over residues 235–253 (QPPPQQQQQQQPPPPPIPL). The span at 254–279 (LPQIHQQLKPKQQQEQQQQQEQQQQQ) shows a compositional bias: low complexity. The stretch at 350 to 383 (QRIKSFIENHKKKKQKYREYQSEKNQQQKSNSKK) forms a coiled coil. Disordered stretches follow at residues 429–453 (DQQQ…SPMT) and 712–745 (NNNN…NLSN). Residues 430–453 (QQQQQQQQQQSTMTTTSSSSSPMT) are compositionally biased toward low complexity.

It localises to the cell surface. In terms of biological role, required for correct organization of the actin cytoskeleton and cytokinesis. Also required for apical sorting of prestalk cells, a prerequisite for formation of the tip at the mound stage and subsequent formation of the fruiting body. May be required for cell adhesion. In Dictyostelium discoideum (Social amoeba), this protein is Defective in tip formation protein A (dtfA).